The sequence spans 370 residues: Protein-glutamate methylesterase/protein-glutamine glutaminase 3 (370 aa).

One can recognise a Response regulatory domain in the interval 3 to 119 (KVLIVDDSAL…SLNVSRIERE (117 aa)). Asp53 is subject to 4-aspartylphosphate. A CheB-type methylesterase domain is found at 166–360 (SLTEIGVVLI…GQLNAWMSRT (195 aa)). Catalysis depends on residues Ser178, His205, and Asp302.

It belongs to the CheB family. Post-translationally, phosphorylated by CheA. Phosphorylation of the N-terminal regulatory domain activates the methylesterase activity.

It is found in the cytoplasm. The enzyme catalyses [protein]-L-glutamate 5-O-methyl ester + H2O = L-glutamyl-[protein] + methanol + H(+). It catalyses the reaction L-glutaminyl-[protein] + H2O = L-glutamyl-[protein] + NH4(+). Involved in chemotaxis. Part of a chemotaxis signal transduction system that modulates chemotaxis in response to various stimuli. Catalyzes the demethylation of specific methylglutamate residues introduced into the chemoreceptors (methyl-accepting chemotaxis proteins or MCP) by CheR. Also mediates the irreversible deamidation of specific glutamine residues to glutamic acid. The protein is Protein-glutamate methylesterase/protein-glutamine glutaminase 3 of Rhodospirillum rubrum (strain ATCC 11170 / ATH 1.1.1 / DSM 467 / LMG 4362 / NCIMB 8255 / S1).